Reading from the N-terminus, the 144-residue chain is Large ribosomal subunit protein uL15 (144 aa).

Positions M1–G53 are disordered. The span at R21–G31 shows a compositional bias: gly residues.

It belongs to the universal ribosomal protein uL15 family. In terms of assembly, part of the 50S ribosomal subunit.

Its function is as follows. Binds to the 23S rRNA. In Glaesserella parasuis serovar 5 (strain SH0165) (Haemophilus parasuis), this protein is Large ribosomal subunit protein uL15.